The primary structure comprises 73 residues: Carboxysome shell vertex protein CsoS4B (73 aa).

One can recognise a BMV domain in the interval M1–D68.

This sequence belongs to the CcmL/EutN family. CsoS4 subfamily. As to quaternary structure, homopentamer.

It is found in the carboxysome. In terms of biological role, probably forms vertices in the carboxysome, a polyhedral inclusion where RuBisCO (ribulose bisphosphate carboxylase, cbbL-cbbS) is sequestered. Has been modeled to induce curvature upon insertion into an otherwise flat hexagonal layer of major carboxysome subunits. Has not been identified in purified carboxysomes; it is expected to be present in very low amounts. This chain is Carboxysome shell vertex protein CsoS4B, found in Prochlorococcus marinus subsp. pastoris (strain CCMP1986 / NIES-2087 / MED4).